A 287-amino-acid polypeptide reads, in one-letter code: Formamidopyrimidine-DNA glycosylase (287 aa).

Residue Pro2 is the Schiff-base intermediate with DNA of the active site. Glu3 (proton donor) is an active-site residue. Lys58 acts as the Proton donor; for beta-elimination activity in catalysis. The DNA site is built by His104, Arg123, and Arg166. Residues 251-287 (RTYDREGQPCRNDGCRGVIGREVQAGRSTFYCPVCQR) form an FPG-type zinc finger. Arg277 serves as the catalytic Proton donor; for delta-elimination activity.

This sequence belongs to the FPG family. As to quaternary structure, monomer. Requires Zn(2+) as cofactor.

It catalyses the reaction Hydrolysis of DNA containing ring-opened 7-methylguanine residues, releasing 2,6-diamino-4-hydroxy-5-(N-methyl)formamidopyrimidine.. The catalysed reaction is 2'-deoxyribonucleotide-(2'-deoxyribose 5'-phosphate)-2'-deoxyribonucleotide-DNA = a 3'-end 2'-deoxyribonucleotide-(2,3-dehydro-2,3-deoxyribose 5'-phosphate)-DNA + a 5'-end 5'-phospho-2'-deoxyribonucleoside-DNA + H(+). Functionally, involved in base excision repair of DNA damaged by oxidation or by mutagenic agents. Acts as a DNA glycosylase that recognizes and removes damaged bases. Has a preference for oxidized purines, such as 7,8-dihydro-8-oxoguanine (8-oxoG). Has AP (apurinic/apyrimidinic) lyase activity and introduces nicks in the DNA strand. Cleaves the DNA backbone by beta-delta elimination to generate a single-strand break at the site of the removed base with both 3'- and 5'-phosphates. This Phenylobacterium zucineum (strain HLK1) protein is Formamidopyrimidine-DNA glycosylase.